We begin with the raw amino-acid sequence, 380 residues long: Probable protein phosphatase 2C 2 (380 aa).

One can recognise a PPM-type phosphatase domain in the interval 69–339 (RSGSFADIGP…DNLTVIVICF (271 aa)). Mn(2+)-binding residues include Asp-113, Gly-114, Asp-287, and Asp-330.

The protein belongs to the PP2C family. Mg(2+) serves as cofactor. It depends on Mn(2+) as a cofactor.

The catalysed reaction is O-phospho-L-seryl-[protein] + H2O = L-seryl-[protein] + phosphate. It catalyses the reaction O-phospho-L-threonyl-[protein] + H2O = L-threonyl-[protein] + phosphate. The protein is Probable protein phosphatase 2C 2 of Oryza sativa subsp. japonica (Rice).